The following is a 296-amino-acid chain: GTPase Era (296 aa).

An Era-type G domain is found at 3–170 (KSGFVTIVGR…KELMFKYIPE (168 aa)). A G1 region spans residues 11–18 (GRPNVGKS). A GTP-binding site is contributed by 11–18 (GRPNVGKS). The tract at residues 37-41 (QTTRN) is G2. A G3 region spans residues 58 to 61 (DTPG). Residues 58–62 (DTPGI) and 120–123 (NKID) each bind GTP. The G4 stretch occupies residues 120-123 (NKID). Residues 149–151 (ISA) are G5. Residues 201-278 (LSEEVPHGIA…YIRLWVKVKE (78 aa)) form the KH type-2 domain.

The protein belongs to the TRAFAC class TrmE-Era-EngA-EngB-Septin-like GTPase superfamily. Era GTPase family. As to quaternary structure, monomer.

The protein resides in the cytoplasm. It is found in the cell membrane. An essential GTPase that binds both GDP and GTP, with rapid nucleotide exchange. Plays a role in 16S rRNA processing and 30S ribosomal subunit biogenesis and possibly also in cell cycle regulation and energy metabolism. The protein is GTPase Era of Clostridium botulinum (strain Loch Maree / Type A3).